Reading from the N-terminus, the 339-residue chain is Probable protein phosphatase 2C 28 (339 aa).

The 248-residue stretch at 87–334 (DHGYHLVKGQ…DDISCVVVSF (248 aa)) folds into the PPM-type phosphatase domain. Positions 124, 125, 286, and 325 each coordinate Mn(2+).

This sequence belongs to the PP2C family. It depends on Mg(2+) as a cofactor. Mn(2+) is required as a cofactor.

The enzyme catalyses O-phospho-L-seryl-[protein] + H2O = L-seryl-[protein] + phosphate. It carries out the reaction O-phospho-L-threonyl-[protein] + H2O = L-threonyl-[protein] + phosphate. The sequence is that of Probable protein phosphatase 2C 28 from Arabidopsis thaliana (Mouse-ear cress).